Reading from the N-terminus, the 352-residue chain is Peptide chain release factor 1 (352 aa).

The residue at position 233 (Q233) is an N5-methylglutamine. A disordered region spans residues 288-309; it reads NAKDRKEQVGSGDRSERIRTYN. Residues 289–306 are compositionally biased toward basic and acidic residues; sequence AKDRKEQVGSGDRSERIR.

It belongs to the prokaryotic/mitochondrial release factor family. In terms of processing, methylated by PrmC. Methylation increases the termination efficiency of RF1.

Its subcellular location is the cytoplasm. Its function is as follows. Peptide chain release factor 1 directs the termination of translation in response to the peptide chain termination codons UAG and UAA. The chain is Peptide chain release factor 1 from Helicobacter pylori (strain HPAG1).